We begin with the raw amino-acid sequence, 1485 residues long: Putative E3 ubiquitin-protein ligase LIN-2 (1485 aa).

The span at 337–353 (EENEDDSDSELDNESVD) shows a compositional bias: acidic residues. 3 disordered regions span residues 337–363 (EENE…IFSP), 384–450 (NQIP…ISNA), and 462–507 (RKND…KLSM). The span at 438–450 (SSPDISIDNISNA) shows a compositional bias: low complexity. The span at 466–484 (SQTPSMNQDNENSLVLNDS) shows a compositional bias: polar residues. One can recognise a U-box domain in the interval 510 to 585 (KPPKDFVCPI…TSWKEQNPEL (76 aa)). WD repeat units follow at residues 1194-1232 (SCKE…KVCD), 1246-1283 (EHTK…IKCI), 1409-1448 (SLST…RVAS), and 1454-1485 (GHTK…WALD).

The enzyme catalyses S-ubiquitinyl-[E2 ubiquitin-conjugating enzyme]-L-cysteine + [acceptor protein]-L-lysine = [E2 ubiquitin-conjugating enzyme]-L-cysteine + N(6)-ubiquitinyl-[acceptor protein]-L-lysine.. The protein operates within protein modification; protein ubiquitination. In terms of biological role, putative E3 ubiquitin-protein ligase involved in the rhizobial infection process. Plays an important role in the early steps of infection thread formation and in growth and differentiation of nodules. This chain is Putative E3 ubiquitin-protein ligase LIN-2, found in Lotus japonicus (Lotus corniculatus var. japonicus).